A 321-amino-acid chain; its full sequence is Large ribosomal subunit protein uL3 (321 aa).

The protein belongs to the universal ribosomal protein uL3 family. In terms of assembly, part of the 50S ribosomal subunit. Forms a cluster with proteins L14 and L24e.

Its function is as follows. One of the primary rRNA binding proteins, it binds directly near the 3'-end of the 23S rRNA, where it nucleates assembly of the 50S subunit. This Nanoarchaeum equitans (strain Kin4-M) protein is Large ribosomal subunit protein uL3.